A 433-amino-acid polypeptide reads, in one-letter code: uncharacterized protein (433 aa).

The first 26 residues, 1–26 (MTRRAEFEMGLFVILQSMFLISLCSS), serve as a signal peptide directing secretion. Residues Asn-59, Asn-72, Asn-125, Asn-159, Asn-210, Asn-275, Asn-282, and Asn-323 are each glycosylated (N-linked (GlcNAc...) asparagine). The GPI-anchor amidated alanine moiety is linked to residue Ala-405. Positions 406-433 (SSQPRLHDEGVTRLVIFVLSMLLVMLLS) are cleaved as a propeptide — removed in mature form.

Its subcellular location is the cell membrane. This is an uncharacterized protein from Arabidopsis thaliana (Mouse-ear cress).